Reading from the N-terminus, the 106-residue chain is MRGSTAMLLAAIALFSSQSFATAIGKSRTLRSFEELEERQLASGSGSNNGLDDVKRSALVELLGEKVVAGGPTSILKAMMKLSDEELQNFIDKNIGSDSDSASGGN.

Positions 1 to 17 (MRGSTAMLLAAIALFSS) are cleaved as a signal peptide. The short motif at 28–39 (RTLRSFEELEER) is the RxLR-dEER element.

The protein belongs to the RxLR effector family.

The protein resides in the secreted. Its subcellular location is the host cell. Functionally, effector that may act as a suppressor of cell death to interrupt plant immunity. I. This chain is Secreted RxLR effector protein 18, found in Plasmopara viticola (Downy mildew of grapevine).